The primary structure comprises 126 residues: Urease subunit beta (126 aa).

This sequence belongs to the urease beta subunit family. In terms of assembly, heterotrimer of UreA (gamma), UreB (beta) and UreC (alpha) subunits. Three heterotrimers associate to form the active enzyme.

The protein resides in the cytoplasm. The enzyme catalyses urea + 2 H2O + H(+) = hydrogencarbonate + 2 NH4(+). Its pathway is nitrogen metabolism; urea degradation; CO(2) and NH(3) from urea (urease route): step 1/1. The chain is Urease subunit beta from Frankia casuarinae (strain DSM 45818 / CECT 9043 / HFP020203 / CcI3).